The sequence spans 176 residues: Small ribosomal subunit protein bS6 (176 aa).

The segment at 97 to 176 (DQYTPNDSPP…VEPVDTTSEE (80 aa)) is disordered. Residues 140–160 (AVETVEPPAEPAEPVEAVETV) are compositionally biased toward low complexity. Over residues 161 to 176 (DTTEETVEPVDTTSEE) the composition is skewed to acidic residues.

This sequence belongs to the bacterial ribosomal protein bS6 family.

Functionally, binds together with bS18 to 16S ribosomal RNA. The protein is Small ribosomal subunit protein bS6 of Gloeothece citriformis (strain PCC 7424) (Cyanothece sp. (strain PCC 7424)).